The sequence spans 161 residues: Large-conductance mechanosensitive channel (161 aa).

2 helical membrane passes run 21-41 and 79-99; these read VGVI…DGVI and GAFI…FLLV. Over residues 142 to 154 the composition is skewed to low complexity; sequence TAAPKAAAAPVAK. The disordered stretch occupies residues 142–161; that stretch reads TAAPKAAAAPVAKPKTKPKA.

It belongs to the MscL family. In terms of assembly, homopentamer.

The protein localises to the cell inner membrane. Its function is as follows. Channel that opens in response to stretch forces in the membrane lipid bilayer. May participate in the regulation of osmotic pressure changes within the cell. The polypeptide is Large-conductance mechanosensitive channel (Caulobacter sp. (strain K31)).